A 292-amino-acid polypeptide reads, in one-letter code: Carbapenem-hydrolyzing beta-lactamase transcriptional activator (292 aa).

The HTH lysR-type domain maps to 5 to 62 (IPLNALRAFEASARYLNFTKAGLELHVSQAAVSQHVRTLEAILGVNLFKRLPRGLQLT). The H-T-H motif DNA-binding region spans 22–41 (FTKAGLELHVSQAAVSQHVR).

Belongs to the LysR transcriptional regulatory family.

This protein is a positive regulator of gene expression of carbapenem-hydrolyzing beta-lactamase (smeA). Seems to also be a repressor of its own transcription. In Serratia marcescens, this protein is Carbapenem-hydrolyzing beta-lactamase transcriptional activator (smeR).